We begin with the raw amino-acid sequence, 164 residues long: Transcriptional repressor NrdR (164 aa).

The segment at 3 to 34 (CPKCNYNKSSVVDSRQAEDGNTIRRRRECEKC) is a zinc-finger region. Positions 49-139 (LLVVKKDGTR…VYKSFKDVDE (91 aa)) constitute an ATP-cone domain.

This sequence belongs to the NrdR family. The cofactor is Zn(2+).

In terms of biological role, negatively regulates transcription of bacterial ribonucleotide reductase nrd genes and operons by binding to NrdR-boxes. The sequence is that of Transcriptional repressor NrdR from Streptococcus uberis (strain ATCC BAA-854 / 0140J).